The primary structure comprises 753 residues: MAP/microtubule affinity-regulating kinase 3 (753 aa).

Residues 1 to 36 (MSTRTPLPTVNERDTENHTSHGDGRQEVTSRTSRSG) are disordered. A compositionally biased stretch (basic and acidic residues) spans 11 to 28 (NERDTENHTSHGDGRQEV). Phosphoserine is present on Ser-42. Residues 56 to 307 (YRLLKTIGKG…LEQIMKDRWI (252 aa)) form the Protein kinase domain. ATP-binding positions include 62 to 70 (IGKGNFAKV) and Lys-85. Asp-178 serves as the catalytic Proton acceptor. Residue Thr-211 is modified to Phosphothreonine; by LKB1. The region spanning 326–365 (ISDQKRIDIMVGMGYSQEEIQESLSKMKYDEITATYLLLG) is the UBA domain. Phosphoserine is present on residues Ser-368, Ser-374, Ser-376, Ser-380, Ser-383, Leu-384, Ser-400, Arg-407, Ser-419, and Ser-469. The tract at residues 370-600 (ELDASDSSSS…TPLSQTRSRG (231 aa)) is disordered. Over residues 374–385 (SDSSSSSNLSLA) the composition is skewed to low complexity. Over residues 391-400 (SDLNNSTGQS) the composition is skewed to polar residues. Polar residues-rich tracts occupy residues 490-513 (STVP…CSER) and 521-548 (VIQN…SSAA). 2 positions are modified to phosphoserine: Ser-540 and Ser-543. Thr-549 is modified (phosphothreonine). Position 564 is a phosphothreonine; by PKC/PRKCZ (Thr-564). Phosphoserine is present on residues Ser-583, Ser-598, Ser-601, and Ser-643. The segment covering 584 to 600 (PSLSHEATPLSQTRSRG) has biased composition (polar residues). Residues 632 to 655 (NGRYEGSSRNVSAEQKDENKEAKP) form a disordered region. Residues 645-655 (EQKDENKEAKP) are compositionally biased toward basic and acidic residues. Residues 704-753 (DGHAENLVQWEMEVCKLPRLSLNGVRFKRISGTSIAFKNIASKIANELKL) enclose the KA1 domain.

Belongs to the protein kinase superfamily. CAMK Ser/Thr protein kinase family. SNF1 subfamily. As to quaternary structure, interacts with MAPT/TAU. Interacts with DLG5 (via coiled-coil domain). Interacts with STK3/MST2 and STK4/MST1 in the presence of DLG5. Interacts with YWHAB, YWHAG, YWHAQ and YWHAZ. Interacts with PKP2 (via N-terminus). Interacts with CDC25C. Interacts with KSR1. In terms of processing, phosphorylated at Thr-211 by STK11/LKB1 in complex with STE20-related adapter-alpha (STRADA) pseudo kinase and CAB39. Phosphorylation at Thr-564 by PRKCZ/aPKC inhibits the kinase activity. As to expression, ubiquitous.

The protein localises to the cell membrane. Its subcellular location is the cell projection. The protein resides in the dendrite. It localises to the cytoplasm. It carries out the reaction L-seryl-[protein] + ATP = O-phospho-L-seryl-[protein] + ADP + H(+). The enzyme catalyses L-threonyl-[protein] + ATP = O-phospho-L-threonyl-[protein] + ADP + H(+). Its activity is regulated as follows. Activated by phosphorylation on Thr-211. Inhibited by phosphorylation on Thr-564. Its function is as follows. Serine/threonine-protein kinase. Involved in the specific phosphorylation of microtubule-associated proteins for MAP2 and MAP4. Phosphorylates the microtubule-associated protein MAPT/TAU. Phosphorylates CDC25C on 'Ser-216'. Regulates localization and activity of some histone deacetylases by mediating phosphorylation of HDAC7, promoting subsequent interaction between HDAC7 and 14-3-3 and export from the nucleus. Regulates localization and activity of MITF by mediating its phosphorylation, promoting subsequent interaction between MITF and 14-3-3 and retention in the cytosol. Negatively regulates the Hippo signaling pathway and antagonizes the phosphorylation of LATS1. Cooperates with DLG5 to inhibit the kinase activity of STK3/MST2 toward LATS1. Phosphorylates PKP2 and KSR1. The chain is MAP/microtubule affinity-regulating kinase 3 (MARK3) from Homo sapiens (Human).